We begin with the raw amino-acid sequence, 121 residues long: Large ribosomal subunit protein uL22c (121 aa).

It belongs to the universal ribosomal protein uL22 family. As to quaternary structure, part of the 50S ribosomal subunit.

The protein localises to the plastid. Its subcellular location is the chloroplast. In terms of biological role, this protein binds specifically to 23S rRNA. The globular domain of the protein is located near the polypeptide exit tunnel on the outside of the subunit, while an extended beta-hairpin is found that lines the wall of the exit tunnel in the center of the 70S ribosome. The sequence is that of Large ribosomal subunit protein uL22c (rpl22) from Welwitschia mirabilis (Tree tumbo).